The sequence spans 621 residues: TOX high mobility group box family member 4 (621 aa).

2 disordered regions span residues 153–227 and 305–333; these read LGLS…QKPV and LDPA…ASIE. Position 176 is a phosphothreonine (Thr176). Ser178, Ser181, and Ser182 each carry phosphoserine. Residues 183-193 are compositionally biased toward basic and acidic residues; the sequence is LHEDGVEDFRR. Over residues 208–218 the composition is skewed to basic residues; the sequence is KQKAPKKRKKK. The short motif at 213 to 218 is the Nuclear localization signal element; that stretch reads KKRKKK. The segment at residues 223–291 is a DNA-binding region (HMG box); it reads PQKPVSAYAL…EYLKALAAYK (69 aa). Over residues 307-319 the composition is skewed to pro residues; the sequence is PAPPSQTPSPPPM. The residue at position 313 (Thr313) is a Phosphothreonine. Phosphoserine is present on Ser315. The span at 320–333 shows a compositional bias: low complexity; it reads ATVDPASPAPASIE. Arg481 bears the Asymmetric dimethylarginine mark. The segment at 510 to 529 is disordered; sequence PTVESSPERPMNNSPEAHTV. Phosphoserine occurs at positions 533, 550, 552, 560, 562, and 567.

Component of the PNUTS-PP1 phosphatase complex, composed of PPP1R10/PNUTS, TOX4, WDR82 and PPP1CA or PPP1CB or PPP1CC. Interacts with PPP1R10/PNUTS. Interacts with FOXO1 and CREB1 (increased by cAMP); FOXO1 and CREB1 are required for full induction of TOX4-dependent activity and the interactions are inhibited by insulin.

It is found in the nucleus. The protein localises to the chromosome. In liver, recruited to target gene promoters following treatment with dexamethasone and cAMP. Binding is decreased in presence of insulin. Functionally, transcription factor that modulates cell fate reprogramming from the somatic state to the pluripotent and neuronal fate. In liver, controls the expression of hormone-regulated gluconeogenic genes such as G6PC1 and PCK1. This regulation is independent of the insulin receptor activation. Also acts as a regulatory component of protein phosphatase 1 (PP1) complexes. Component of the PNUTS-PP1 protein phosphatase complex, a PP1 complex that regulates RNA polymerase II transcription pause-release. PNUTS-PP1 also plays a role in the control of chromatin structure and cell cycle progression during the transition from mitosis into interphase. The polypeptide is TOX high mobility group box family member 4 (TOX4) (Pongo abelii (Sumatran orangutan)).